We begin with the raw amino-acid sequence, 138 residues long: Large ribosomal subunit protein uL16c (138 aa).

A disordered region spans residues 1 to 21; sequence MLSPQKTKFRKQHRGRMKGVS. Residues 7–21 show a composition bias toward basic residues; that stretch reads TKFRKQHRGRMKGVS.

The protein belongs to the universal ribosomal protein uL16 family. In terms of assembly, part of the 50S ribosomal subunit.

It localises to the plastid. Its subcellular location is the chloroplast. The polypeptide is Large ribosomal subunit protein uL16c (Cycas taitungensis (Prince sago)).